A 238-amino-acid chain; its full sequence is N-terminal acetyltransferase A complex catalytic subunit ARD1 (238 aa).

The N-acetyltransferase domain occupies 35-195; sequence YHILSWPEAS…DAYAMKKVLK (161 aa).

Belongs to the acetyltransferase family. ARD1 subfamily. As to quaternary structure, component of the N-terminal acetyltransferase A (NatA) complex, which is composed of ARD1, NAT1 and NAT5. Can self-associate.

It is found in the cytoplasm. It carries out the reaction N-terminal glycyl-[protein] + acetyl-CoA = N-terminal N(alpha)-acetylglycyl-[protein] + CoA + H(+). The enzyme catalyses N-terminal L-alanyl-[protein] + acetyl-CoA = N-terminal N(alpha)-acetyl-L-alanyl-[protein] + CoA + H(+). It catalyses the reaction N-terminal L-seryl-[protein] + acetyl-CoA = N-terminal N(alpha)-acetyl-L-seryl-[protein] + CoA + H(+). The catalysed reaction is N-terminal L-valyl-[protein] + acetyl-CoA = N-terminal N(alpha)-acetyl-L-valyl-[protein] + CoA + H(+). It carries out the reaction N-terminal L-cysteinyl-[protein] + acetyl-CoA = N-terminal N(alpha)-acetyl-L-cysteinyl-[protein] + CoA + H(+). The enzyme catalyses N-terminal L-threonyl-[protein] + acetyl-CoA = N-terminal N(alpha)-acetyl-L-threonyl-[protein] + CoA + H(+). In terms of biological role, catalytic component of the NatA N-terminal acetyltransferase, which catalyzes acetylation of proteins beginning with Met-Ser, Met-Gly and Met-Ala. N-acetylation plays a role in normal eukaryotic translation and processing, protect against proteolytic degradation and protein turnover. This chain is N-terminal acetyltransferase A complex catalytic subunit ARD1 (ARD1), found in Saccharomyces cerevisiae (strain ATCC 204508 / S288c) (Baker's yeast).